Consider the following 169-residue polypeptide: Peptide deformylase (169 aa).

Positions 94 and 136 each coordinate Fe cation. Glu-137 is a catalytic residue. His-140 serves as a coordination point for Fe cation.

It belongs to the polypeptide deformylase family. Fe(2+) serves as cofactor.

The enzyme catalyses N-terminal N-formyl-L-methionyl-[peptide] + H2O = N-terminal L-methionyl-[peptide] + formate. Functionally, removes the formyl group from the N-terminal Met of newly synthesized proteins. Requires at least a dipeptide for an efficient rate of reaction. N-terminal L-methionine is a prerequisite for activity but the enzyme has broad specificity at other positions. The protein is Peptide deformylase of Desulfotalea psychrophila (strain LSv54 / DSM 12343).